The sequence spans 326 residues: Ribosomal large subunit pseudouridine synthase D (326 aa).

The region spanning Gln18 to Glu91 is the S4 RNA-binding domain. The active site involves Asp139.

It belongs to the pseudouridine synthase RluA family. As to quaternary structure, in late stage pre-50S ribosomal subunit interacts with ObgE and DarP(YjgA).

Its subcellular location is the cytoplasm. It catalyses the reaction uridine(1911/1915/1917) in 23S rRNA = pseudouridine(1911/1915/1917) in 23S rRNA. In terms of biological role, responsible for synthesis of pseudouridine from uracil at positions 1911, 1915 and 1917 in 23S ribosomal RNA. Other positions are not modified. Uridine isomerization occurs as a late step during the assembly of the large ribosomal subunit. Member of a network of 50S ribosomal subunit biogenesis factors (ObgE, RluD, RsfS and DarP(YjgA)) which assembles along the 30S-50S interface, allowing 23S rRNA modification and preventing incorrect 23S rRNA structures from forming. The polypeptide is Ribosomal large subunit pseudouridine synthase D (Escherichia coli (strain K12)).